The sequence spans 570 residues: Formate--tetrahydrofolate ligase (570 aa).

65–72 is an ATP binding site; it reads TPLGEGKT.

Belongs to the formate--tetrahydrofolate ligase family.

It catalyses the reaction (6S)-5,6,7,8-tetrahydrofolate + formate + ATP = (6R)-10-formyltetrahydrofolate + ADP + phosphate. The protein operates within one-carbon metabolism; tetrahydrofolate interconversion. The protein is Formate--tetrahydrofolate ligase of Herpetosiphon aurantiacus (strain ATCC 23779 / DSM 785 / 114-95).